Consider the following 256-residue polypeptide: Zinc import ATP-binding protein ZnuC (256 aa).

An ABC transporter domain is found at 6–221 (IAAEGLSIRV…PEYRALFGTG (216 aa)). Residue 38 to 45 (GPNGSGKS) coordinates ATP. Positions 237-256 (HDDDCGHDHGAEHMHPHGDR) are disordered.

This sequence belongs to the ABC transporter superfamily. Zinc importer (TC 3.A.1.15.5) family. As to quaternary structure, the complex is composed of two ATP-binding proteins (ZnuC), two transmembrane proteins (ZnuB) and a solute-binding protein (ZnuA).

The protein localises to the cell inner membrane. The catalysed reaction is Zn(2+)(out) + ATP(in) + H2O(in) = Zn(2+)(in) + ADP(in) + phosphate(in) + H(+)(in). Part of the ABC transporter complex ZnuABC involved in zinc import. Responsible for energy coupling to the transport system. This chain is Zinc import ATP-binding protein ZnuC, found in Ruegeria pomeroyi (strain ATCC 700808 / DSM 15171 / DSS-3) (Silicibacter pomeroyi).